Reading from the N-terminus, the 144-residue chain is Large ribosomal subunit protein uL11 (144 aa).

This sequence belongs to the universal ribosomal protein uL11 family. Part of the ribosomal stalk of the 50S ribosomal subunit. Interacts with L10 and the large rRNA to form the base of the stalk. L10 forms an elongated spine to which L12 dimers bind in a sequential fashion forming a multimeric L10(L12)X complex. Post-translationally, one or more lysine residues are methylated.

Its function is as follows. Forms part of the ribosomal stalk which helps the ribosome interact with GTP-bound translation factors. The chain is Large ribosomal subunit protein uL11 from Deinococcus geothermalis (strain DSM 11300 / CIP 105573 / AG-3a).